The sequence spans 313 residues: Putative HTH-type transcriptional regulatory protein Msm_0453 (313 aa).

An HTH cro/C1-type domain is found at 131–189; that stretch reads IKQYREEYSLSLKDLADLAHVSRATMYKYENEIVRANTETAMILEEILNTKVTLDIDLL. Positions 142-161 form a DNA-binding region, H-T-H motif; that stretch reads LKDLADLAHVSRATMYKYEN.

In Methanobrevibacter smithii (strain ATCC 35061 / DSM 861 / OCM 144 / PS), this protein is Putative HTH-type transcriptional regulatory protein Msm_0453.